Consider the following 336-residue polypeptide: Type II methyltransferase M2.HphI (336 aa).

It belongs to the N(4)/N(6)-methyltransferase family.

It catalyses the reaction a 2'-deoxyadenosine in DNA + S-adenosyl-L-methionine = an N(6)-methyl-2'-deoxyadenosine in DNA + S-adenosyl-L-homocysteine + H(+). In terms of biological role, an alpha subtype methylase that recognizes the double-stranded sequence 5'-GGTGA-3', probably methylates A-5 on the top strand, and protects the DNA from cleavage by the HphI endonuclease. The polypeptide is Type II methyltransferase M2.HphI (hphIBM) (Haemophilus parahaemolyticus).